A 688-amino-acid polypeptide reads, in one-letter code: Soluble guanylate cyclase gcy-35 (688 aa).

H105 is a binding site for heme. The stretch at L358–M401 forms a coiled coil. The Guanylate cyclase domain maps to T424–E552. The Mg(2+) site is built by D429 and D473. Residues V644–S688 are disordered. The span at N646–N659 shows a compositional bias: low complexity.

It belongs to the adenylyl cyclase class-4/guanylyl cyclase family. As to quaternary structure, heterodimer; heterodimerizes with gcy-36, and possibly with other soluble guanylate cyclases. Heme is required as a cofactor. Expressed in URX, AQR and PQR neurons. Also expressed in ALN, SDQ and BDU neurons, and variably in AVM, PLM and PLN neurons, pharyngeal and body wall muscles, and the excretory cell.

The protein localises to the cytoplasm. The protein resides in the cell projection. Its subcellular location is the dendrite. The catalysed reaction is GTP = 3',5'-cyclic GMP + diphosphate. Regulated by molecular oxygen, which binds to the heme binding site. Probably not activated by nitric oxide (NO). Its function is as follows. Plays a central role in social feeding behavior and oxygen sensation by synthesizing 3',5'-cyclic guanosine monophosphate (cGMP) from GTP. Oxygen, which binds to its heme-binding sites, probably regulates social behavior by modulating its activity. cGMP is a common second messenger in sensory transduction and is implicated in oxygen sensation. Indeed, C.elegans exhibits a strong behavioral preference for 5-12% oxygen, avoiding higher and lower oxygen levels; a higher level of oxygen inducing a naturally polymorphic social feeding behavior. Involved in avoidance of hyperoxia and for oxygen-induced aggregation and bordering, probably by mediating oxygen-sensing in URX, AQR and PQR sensory neurons. This chain is Soluble guanylate cyclase gcy-35 (gcy-35), found in Caenorhabditis elegans.